The primary structure comprises 1416 residues: 1-phosphatidylinositol 4,5-bisphosphate phosphodiesterase eta-2 (1416 aa).

The necessary for plasma membrane localization stretch occupies residues 1–155 (MSGPWPSPDS…WVTGLRYLMA (155 aa)). The 109-residue stretch at 47–155 (GAMQEGMQMV…WVTGLRYLMA (109 aa)) folds into the PH domain. EF-hand domains follow at residues 169–204 (TRDQWLKQTFDEADKNGDGSLSIGEVLQLLHKLNVN) and 205–241 (LPRQRVKQMFREADTDDHQGTLGFEEFCAFYKMMSTR). The Ca(2+) site is built by aspartate 182, asparagine 184, aspartate 186, serine 188, and glutamate 193. Positions 326-471 (QDMTQPLSHY…LKGKILVKGK (146 aa)) constitute a PI-PLC X-box domain. Residue histidine 341 is part of the active site. The Ca(2+) site is built by asparagine 342, glutamate 371, and aspartate 373. Histidine 385 is an active-site residue. Glutamate 420 contributes to the Ca(2+) binding site. Positions 469 and 471 each coordinate substrate. Phosphoserine is present on residues serine 487 and serine 491. Residues 535-620 (DPNNFSVSTL…RGATRQKKTM (86 aa)) are disordered. The segment covering 537–546 (NNFSVSTLSP) has biased composition (polar residues). Over residues 581–592 (SRRKKKGSKLKK) the composition is skewed to basic residues. Serine 595 and serine 605 each carry phosphoserine. The region spanning 626–740 (LSDLVKYTKS…GYVLKPGCMC (115 aa)) is the PI-PLC Y-box domain. Substrate is bound by residues serine 653 and arginine 680. The C2 domain maps to 740-869 (CQGVFNPNSE…PGYRHVYLEG (130 aa)). Ca(2+) contacts are provided by isoleucine 784, aspartate 786, aspartate 810, aspartate 839, histidine 840, and aspartate 841. 3 disordered regions span residues 905–1109 (GSLD…GGWR), 1121–1222 (YSDA…LQPR), and 1315–1405 (ITSP…GPAS). The span at 1011-1021 (APGPGPPPPAA) shows a compositional bias: pro residues. Polar residues predominate over residues 1073–1083 (GSQTDGRSQPR). Residues 1143 to 1166 (VSSSSSMSSSDTVIDLSLPSLGLG) are compositionally biased toward low complexity. Over residues 1199-1208 (KSKSNPNLRA) the composition is skewed to polar residues. A compositionally biased stretch (gly residues) spans 1324 to 1333 (AGEGVAGGPG).

The cofactor is Ca(2+). As to expression, expressed in retina and kidney.

It is found in the cytoplasm. Its subcellular location is the cell membrane. The catalysed reaction is a 1,2-diacyl-sn-glycero-3-phospho-(1D-myo-inositol-4,5-bisphosphate) + H2O = 1D-myo-inositol 1,4,5-trisphosphate + a 1,2-diacyl-sn-glycerol + H(+). With respect to regulation, activity is stimulated by GNB1:GNG2. The production of the second messenger molecules diacylglycerol (DAG) and inositol 1,4,5-trisphosphate (IP3) is mediated by activated phosphatidylinositol-specific phospholipase C enzymes. This phospholipase activity is very sensitive to calcium. May be important for formation and maintenance of the neuronal network in the postnatal brain. The chain is 1-phosphatidylinositol 4,5-bisphosphate phosphodiesterase eta-2 from Homo sapiens (Human).